Reading from the N-terminus, the 810-residue chain is LPS-assembly protein LptD (810 aa).

A signal peptide spans 1-29 (MTKRTLGYSYPIALTISLVPALTPAIVQA).

Belongs to the LptD family. Component of the lipopolysaccharide transport and assembly complex. Interacts with LptE and LptA.

Its subcellular location is the cell outer membrane. Functionally, together with LptE, is involved in the assembly of lipopolysaccharide (LPS) at the surface of the outer membrane. This is LPS-assembly protein LptD from Aeromonas hydrophila subsp. hydrophila (strain ATCC 7966 / DSM 30187 / BCRC 13018 / CCUG 14551 / JCM 1027 / KCTC 2358 / NCIMB 9240 / NCTC 8049).